Reading from the N-terminus, the 830-residue chain is WD repeat-containing protein 75 (830 aa).

9 WD repeats span residues 4–42 (EGVR…KVYS), 46–85 (EECV…KLWD), 89–130 (GILI…QLVS), 144–183 (RQLT…YFFK), 192–230 (LPST…RLWR), 236–275 (QKYT…VEWR), 278–317 (SEKN…TVIH), 323–361 (SAVI…QFYS), and 375–422 (QQEY…KLWN). A Glycyl lysine isopeptide (Lys-Gly) (interchain with G-Cter in SUMO2) cross-link involves residue Lys426. WD repeat units follow at residues 429–473 (GFVL…KVWI), 486–524 (AWTC…TIWD), 528–568 (WELK…CCWN), and 573–610 (SIQW…FVFK). Residues Ser663 and Ser671 each carry the phosphoserine modification. Residue Lys675 forms a Glycyl lysine isopeptide (Lys-Gly) (interchain with G-Cter in SUMO2) linkage. Residues 761-807 (KSAEEVPDDVDMEGNKESDDSDEEYDLTEKDKETNNNTDLGEDAIHQ) are disordered. A phosphoserine mark is found at Ser778 and Ser781. Residue Tyr785 is modified to Phosphotyrosine. Ser811 carries the phosphoserine modification.

In terms of assembly, component of the proposed t-UTP subcomplex of the ribosomal small subunit (SSU) processome. SSU processome is composed of more than 70 proteins and the RNA chaperone small nucleolar RNA (snoRNA) U3.

The protein resides in the nucleus. The protein localises to the nucleolus. Its function is as follows. Ribosome biogenesis factor. Part of the small subunit (SSU) processome, first precursor of the small eukaryotic ribosomal subunit. During the assembly of the SSU processome in the nucleolus, many ribosome biogenesis factors, an RNA chaperone and ribosomal proteins associate with the nascent pre-rRNA and work in concert to generate RNA folding, modifications, rearrangements and cleavage as well as targeted degradation of pre-ribosomal RNA by the RNA exosome. Involved in nucleolar processing of pre-18S ribosomal RNA. Required for optimal pre-ribosomal RNA transcription by RNA polymerase I. In Mus musculus (Mouse), this protein is WD repeat-containing protein 75 (Wdr75).